The following is a 349-amino-acid chain: Phenylalanine--tRNA ligase alpha subunit (349 aa).

Glu258 contributes to the Mg(2+) binding site.

It belongs to the class-II aminoacyl-tRNA synthetase family. Phe-tRNA synthetase alpha subunit type 1 subfamily. As to quaternary structure, tetramer of two alpha and two beta subunits. The cofactor is Mg(2+).

The protein resides in the cytoplasm. The catalysed reaction is tRNA(Phe) + L-phenylalanine + ATP = L-phenylalanyl-tRNA(Phe) + AMP + diphosphate + H(+). The sequence is that of Phenylalanine--tRNA ligase alpha subunit from Rickettsia canadensis (strain McKiel).